We begin with the raw amino-acid sequence, 290 residues long: uncharacterized protein (290 aa).

Residue K203 is the Schiff-base intermediate with substrate of the active site.

The protein belongs to the DeoC/FbaB aldolase family.

This is an uncharacterized protein from Pasteurella multocida (strain Pm70).